We begin with the raw amino-acid sequence, 84 residues long: MTLFNSISSISNSTGLYKQSLIANVDGMTISSSGNSSSWLSGFDGCGGCGGFGGCGGGFGGCGGSNLNIINVDMNIGRRHRRCC.

The protein belongs to the UPF0512 family.

This chain is UPF0512 protein O, found in Dictyostelium discoideum (Social amoeba).